Here is a 466-residue protein sequence, read N- to C-terminus: NVGLKAVFKDYKLTYYTPDYETKVTDILAAFRVTPQPGVPPEEAGAAVAXESSTGTWTTVWTDGLTSLDRYKGPCYHIEPVAGEENQFIAYVAYPLDLFEEGXVTNMFTSIVGNVFGFKALRALRLEDLRIPPAYVKTFQGPPHGIQVERDKLNKYGRPLLGCTIKPKLGLSAKNYGRAVYECLRGGLDFTKDDENVNSQPFMRWRDRFLFXXEALYKAQAETGEIKGHYLNXTAGTSEEMIKRAVFARELGVPIVMHDYLTGGFTSNTSLAHYCRDNGLLLHIHRAMHAVIDRQKNHGIHFRVLAKXLRMSGGDHIHSGTVVGKLEGEREITLGFVDLLRDDFIEKDRSRGIYFTQDWVSMPGVLPVRSGGIHVWHMPALTEIFGDDSVLQFGGGTLGHPWGNAPGRVANRVALEACVQARNEGRDLAREGNEIIRKAATWSPELSAACEVWKEIKFEFAAMDTL.

Lys5 bears the N6,N6,N6-trimethyllysine mark. Residues Asn114 and Thr164 each contribute to the substrate site. Residue Lys166 is the Proton acceptor of the active site. Lys168 contributes to the substrate binding site. Mg(2+)-binding residues include Lys192, Asp194, and Glu195. Lys192 is subject to N6-carboxylysine. His285 serves as the catalytic Proton acceptor. Substrate is bound by residues Arg286, His318, and Ser370.

This sequence belongs to the RuBisCO large chain family. Type I subfamily. In terms of assembly, heterohexadecamer of 8 large chains and 8 small chains. It depends on Mg(2+) as a cofactor.

Its subcellular location is the plastid. The protein resides in the chloroplast. The enzyme catalyses 2 (2R)-3-phosphoglycerate + 2 H(+) = D-ribulose 1,5-bisphosphate + CO2 + H2O. The catalysed reaction is D-ribulose 1,5-bisphosphate + O2 = 2-phosphoglycolate + (2R)-3-phosphoglycerate + 2 H(+). In terms of biological role, ruBisCO catalyzes two reactions: the carboxylation of D-ribulose 1,5-bisphosphate, the primary event in carbon dioxide fixation, as well as the oxidative fragmentation of the pentose substrate in the photorespiration process. Both reactions occur simultaneously and in competition at the same active site. The polypeptide is Ribulose bisphosphate carboxylase large chain (Lobelia sp).